Here is a 468-residue protein sequence, read N- to C-terminus: Protein ABHD15 (468 aa).

The first 23 residues, 1 to 23 (MPPWGAALALILAVLALLGLLGP), serve as a signal peptide directing secretion. A disordered region spans residues 33–61 (VGERTLPGAQDRDDGEEADGGGPADQFSD). Catalysis depends on charge relay system residues aspartate 360 and histidine 391. Serine 434 bears the Phosphoserine mark.

It belongs to the AB hydrolase superfamily. AB hydrolase 4 family. As to quaternary structure, interacts with PDE3B; this interaction regulates PDE3B's stability and expression and, thereby, impacts the antilipolytic action of insulin.

The protein resides in the secreted. Functionally, may regulate adipocyte lipolysis and liver lipid accumulation. The polypeptide is Protein ABHD15 (Homo sapiens (Human)).